The chain runs to 396 residues: Mevalonate kinase (396 aa).

ATP is bound by residues Lys13, Asn55, Ser135, and 140-146 (GAGLGSS). Ser146 functions as the Proton donor in the catalytic mechanism. Mg(2+) is bound by residues Ser146 and Glu193. Catalysis depends on Asp204, which acts as the Proton acceptor.

Belongs to the GHMP kinase family. Mevalonate kinase subfamily. As to quaternary structure, homodimer. Requires Mg(2+) as cofactor.

It localises to the cytoplasm. The protein localises to the peroxisome. It catalyses the reaction (R)-mevalonate + ATP = (R)-5-phosphomevalonate + ADP + H(+). Its pathway is isoprenoid biosynthesis; isopentenyl diphosphate biosynthesis via mevalonate pathway; isopentenyl diphosphate from (R)-mevalonate: step 1/3. With respect to regulation, farnesyl pyrophosphate and geranyl pyrophosphate inhibit mevalonate kinase activity by binding competitively at the ATP-binding sites. Functionally, catalyzes the phosphorylation of mevalonate to mevalonate 5-phosphate, a key step in isoprenoid and cholesterol biosynthesis. This chain is Mevalonate kinase, found in Homo sapiens (Human).